A 185-amino-acid polypeptide reads, in one-letter code: MGRCLRNHSITYKTPKVPYERERFDAELKLVGQFGLKNKKEIQRVHYMLGHMRTIAKVMLMKDAKDPKRLLEGAALLRRLHNLGILPRDQNKLEFVLALKEENLLERRLQTLVYRKGFAKSIHHARVLIRGKMIKVGKQVVDVPSFLVRVESEPLIQLADNTPLTNPEINGRRKRKNNHAGKEDN.

In terms of domain architecture, S4 RNA-binding spans 107–179 (RRLQTLVYRK…NGRRKRKNNH (73 aa)). Residues 161–185 (NTPLTNPEINGRRKRKNNHAGKEDN) are disordered.

The protein belongs to the universal ribosomal protein uS4 family.

The sequence is that of Small ribosomal subunit protein uS4 from Entamoeba histolytica (strain ATCC 30459 / HM-1:IMSS / ABRM).